A 159-amino-acid polypeptide reads, in one-letter code: Transcriptional repressor NrdR (159 aa).

The segment covering 1-11 has biased composition (polar residues); sequence MQCPTCQNTDS. The disordered stretch occupies residues 1-21; the sequence is MQCPTCQNTDSRVLESRSADS. The segment at 3–34 is a zinc-finger region; that stretch reads CPTCQNTDSRVLESRSADSGKSVRRRRECLNC. An ATP-cone domain is found at 49–139; that stretch reads VSVLKKDGGR…VYRKFNGVKD (91 aa).

It belongs to the NrdR family. Zn(2+) is required as a cofactor.

Functionally, negatively regulates transcription of bacterial ribonucleotide reductase nrd genes and operons by binding to NrdR-boxes. This chain is Transcriptional repressor NrdR, found in Prochlorococcus marinus (strain AS9601).